A 475-amino-acid chain; its full sequence is Ankyrin repeat, SAM and basic leucine zipper domain-containing protein 1 (475 aa).

A disordered region spans residues Met-1–Trp-25. Phosphoserine occurs at positions 17, 18, and 20. 6 ANK repeats span residues Glu-45 to Ser-74, Tyr-78 to Phe-107, Asp-110 to Val-144, Arg-148 to Thr-177, Asn-181 to Leu-210, and Asp-214 to Gly-243. In terms of domain architecture, SAM spans Ser-272–Gln-334.

In terms of assembly, interacts with DDX4, PIWIL1, RANBP9 and TDRD1.

The protein localises to the cytoplasm. Functionally, plays a central role during spermatogenesis by repressing transposable elements and preventing their mobilization, which is essential for the germline integrity. Acts via the piRNA metabolic process, which mediates the repression of transposable elements during meiosis by forming complexes composed of piRNAs and Piwi proteins and governs the methylation and subsequent repression of transposons. Its association with pi-bodies suggests a participation in the primary piRNAs metabolic process. Required prior to the pachytene stage to facilitate the production of multiple types of piRNAs, including those associated with repeats involved in the regulation of retrotransposons. May act by mediating protein-protein interactions during germ cell maturation. This chain is Ankyrin repeat, SAM and basic leucine zipper domain-containing protein 1 (ASZ1), found in Nomascus leucogenys (Northern white-cheeked gibbon).